Reading from the N-terminus, the 217-residue chain is Thiamine-phosphate synthase (217 aa).

4-amino-2-methyl-5-(diphosphooxymethyl)pyrimidine contacts are provided by residues Gln39–Lys43 and Asn71. Mg(2+) is bound by residues Asp72 and Asp91. Thr110 lines the 4-amino-2-methyl-5-(diphosphooxymethyl)pyrimidine pocket. Residue Ser137 to Thr139 participates in 2-[(2R,5Z)-2-carboxy-4-methylthiazol-5(2H)-ylidene]ethyl phosphate binding. Lys140 contributes to the 4-amino-2-methyl-5-(diphosphooxymethyl)pyrimidine binding site. Gly167 lines the 2-[(2R,5Z)-2-carboxy-4-methylthiazol-5(2H)-ylidene]ethyl phosphate pocket.

It belongs to the thiamine-phosphate synthase family. Mg(2+) serves as cofactor.

It carries out the reaction 2-[(2R,5Z)-2-carboxy-4-methylthiazol-5(2H)-ylidene]ethyl phosphate + 4-amino-2-methyl-5-(diphosphooxymethyl)pyrimidine + 2 H(+) = thiamine phosphate + CO2 + diphosphate. The catalysed reaction is 2-(2-carboxy-4-methylthiazol-5-yl)ethyl phosphate + 4-amino-2-methyl-5-(diphosphooxymethyl)pyrimidine + 2 H(+) = thiamine phosphate + CO2 + diphosphate. It catalyses the reaction 4-methyl-5-(2-phosphooxyethyl)-thiazole + 4-amino-2-methyl-5-(diphosphooxymethyl)pyrimidine + H(+) = thiamine phosphate + diphosphate. The protein operates within cofactor biosynthesis; thiamine diphosphate biosynthesis; thiamine phosphate from 4-amino-2-methyl-5-diphosphomethylpyrimidine and 4-methyl-5-(2-phosphoethyl)-thiazole: step 1/1. Functionally, condenses 4-methyl-5-(beta-hydroxyethyl)thiazole monophosphate (THZ-P) and 2-methyl-4-amino-5-hydroxymethyl pyrimidine pyrophosphate (HMP-PP) to form thiamine monophosphate (TMP). In Saccharophagus degradans (strain 2-40 / ATCC 43961 / DSM 17024), this protein is Thiamine-phosphate synthase.